The primary structure comprises 30 residues: Cyclotide vdif-A (30 aa).

The segment at residues 1–30 is a cross-link (cyclopeptide (Gly-Asn)); that stretch reads GIPCGESCVFIPCISSVVGCSCKSKVCYRN. Cystine bridges form between Cys-4–Cys-20, Cys-8–Cys-22, and Cys-13–Cys-27.

It belongs to the cyclotide family. Bracelet subfamily. This is a cyclic peptide.

Probably participates in a plant defense mechanism. This is Cyclotide vdif-A from Viola diffusa.